A 230-amino-acid polypeptide reads, in one-letter code: Large ribosomal subunit protein uL1 (230 aa).

It belongs to the universal ribosomal protein uL1 family. In terms of assembly, part of the 50S ribosomal subunit.

In terms of biological role, binds directly to 23S rRNA. The L1 stalk is quite mobile in the ribosome, and is involved in E site tRNA release. Protein L1 is also a translational repressor protein, it controls the translation of the L11 operon by binding to its mRNA. This is Large ribosomal subunit protein uL1 from Nitrobacter winogradskyi (strain ATCC 25391 / DSM 10237 / CIP 104748 / NCIMB 11846 / Nb-255).